We begin with the raw amino-acid sequence, 281 residues long: Beta-etherase (281 aa).

Positions 11–87 constitute a GST N-terminal domain; the sequence is DLQLESGCTI…YLDEKYPDRP (77 aa). Positions 244 to 281 are disordered; that stretch reads GDPEPFVRQTGPAGAGGQALNKGPQTTKMPPRVAEKAD.

Belongs to the GST superfamily.

The protein localises to the cell inner membrane. Functionally, able to degrade various dimeric lignin compounds. Catalyzes the unique and reductive cleavage of arylglycerol-beta-aryl ether. This chain is Beta-etherase (ligE), found in Sphingobium sp. (strain NBRC 103272 / SYK-6).